Here is a 491-residue protein sequence, read N- to C-terminus: Lysine--tRNA ligase (491 aa).

Residues Glu-400 and Glu-407 each contribute to the Mg(2+) site.

The protein belongs to the class-II aminoacyl-tRNA synthetase family. Homodimer. Mg(2+) serves as cofactor.

The protein resides in the cytoplasm. The catalysed reaction is tRNA(Lys) + L-lysine + ATP = L-lysyl-tRNA(Lys) + AMP + diphosphate. This is Lysine--tRNA ligase from Mesomycoplasma hyopneumoniae (strain 7448) (Mycoplasma hyopneumoniae).